The following is a 519-amino-acid chain: Chaperone SurA (519 aa).

Residues 1–31 (MMRSLHSLRRMSGTVLALMLAAGLPLSAAQA) form the signal peptide. Composition is skewed to low complexity over residues 31–45 (AQPAKPAPKGDQKPA) and 197–207 (PAAAQATRAPA). Disordered stretches follow at residues 31–50 (AQPAKPAPKGDQKPATPAPS) and 196–221 (NPAAAQATRAPAPQQPQPQPRQPAQS). In terms of domain architecture, PpiC 1 spans 223–324 (PAMLVLAQIL…NGFHILKVVD (102 aa)). The segment at 328 to 361 (GGQPAQAARPAPAPAPQQPSSFQEGPSVAAPQGP) is disordered. Residues 364 to 463 (VTQTHARHIL…FGWHLIQVLE (100 aa)) form the PpiC 2 domain.

The protein localises to the periplasm. It carries out the reaction [protein]-peptidylproline (omega=180) = [protein]-peptidylproline (omega=0). Its function is as follows. Chaperone involved in the correct folding and assembly of outer membrane proteins. Recognizes specific patterns of aromatic residues and the orientation of their side chains, which are found more frequently in integral outer membrane proteins. May act in both early periplasmic and late outer membrane-associated steps of protein maturation. This Bordetella bronchiseptica (strain ATCC BAA-588 / NCTC 13252 / RB50) (Alcaligenes bronchisepticus) protein is Chaperone SurA.